A 211-amino-acid polypeptide reads, in one-letter code: MSARRPFSKWALLALLFVTLVAIDQWTKYLAVERLTTLFERTGAETLGERLAGFLEHQHLEPISTDPYYVWRPVWRMNYVENPGAAWGLFRGHSEAFRNGFFTLVSLGAVAFILHYYRKLRAEQRYLQVALALVLSGAVGNFLDRLARGYVIDFIEWYWWNRPDIRWPTFNIADSLIVVGVALLVLHPGSGKAAQKAGADAEGDRRASTGG.

Transmembrane regions (helical) follow at residues Leu12–Val32, Ala96–Tyr116, and Leu127–Ala147. Residues Asp153 and Asp174 contribute to the active site. The helical transmembrane segment at Trp167–His187 threads the bilayer.

Belongs to the peptidase A8 family.

The protein localises to the cell inner membrane. It carries out the reaction Release of signal peptides from bacterial membrane prolipoproteins. Hydrolyzes -Xaa-Yaa-Zaa-|-(S,diacylglyceryl)Cys-, in which Xaa is hydrophobic (preferably Leu), and Yaa (Ala or Ser) and Zaa (Gly or Ala) have small, neutral side chains.. Its pathway is protein modification; lipoprotein biosynthesis (signal peptide cleavage). Functionally, this protein specifically catalyzes the removal of signal peptides from prolipoproteins. In Anaeromyxobacter sp. (strain Fw109-5), this protein is Lipoprotein signal peptidase.